The chain runs to 565 residues: NAD-dependent malic enzyme (565 aa).

Tyr104 (proton donor) is an active-site residue. Arg157 provides a ligand contact to NAD(+). Residue Lys175 is the Proton acceptor of the active site. A divalent metal cation is bound by residues Glu246, Asp247, and Asp270. Asp270 and Asn418 together coordinate NAD(+).

This sequence belongs to the malic enzymes family. Homotetramer. Requires Mg(2+) as cofactor. It depends on Mn(2+) as a cofactor.

It carries out the reaction (S)-malate + NAD(+) = pyruvate + CO2 + NADH. The catalysed reaction is oxaloacetate + H(+) = pyruvate + CO2. This chain is NAD-dependent malic enzyme, found in Edwardsiella ictaluri (strain 93-146).